Here is a 178-residue protein sequence, read N- to C-terminus: PRA1 family protein 2 (178 aa).

Topologically, residues methionine 1–leucine 41 are cytoplasmic. A helical membrane pass occupies residues leucine 42–valine 62. The Extracellular portion of the chain corresponds to arginine 63 to proline 64. A helical membrane pass occupies residues leucine 65–alanine 85. Residues glutamate 86–arginine 96 are Cytoplasmic-facing. Residues serine 97 to glycine 119 form a helical membrane-spanning segment. Over alanine 120–threonine 122 the chain is Extracellular. The chain crosses the membrane as a helical span at residues phenylalanine 123 to leucine 140. The Cytoplasmic portion of the chain corresponds to arginine 141 to serine 178.

It belongs to the PRA1 family. Interacts with CCR5 and GDE1.

The protein resides in the endosome membrane. Functionally, may be involved in ER/Golgi transport and vesicular traffic. Plays a proapoptotic role in cerulenin-induced neuroblastoma apoptosis. The polypeptide is PRA1 family protein 2 (PRAF2) (Macaca fascicularis (Crab-eating macaque)).